Consider the following 116-residue polypeptide: Large ribosomal subunit protein bL19 (116 aa).

This sequence belongs to the bacterial ribosomal protein bL19 family.

In terms of biological role, this protein is located at the 30S-50S ribosomal subunit interface and may play a role in the structure and function of the aminoacyl-tRNA binding site. This chain is Large ribosomal subunit protein bL19, found in Flavobacterium johnsoniae (strain ATCC 17061 / DSM 2064 / JCM 8514 / BCRC 14874 / CCUG 350202 / NBRC 14942 / NCIMB 11054 / UW101) (Cytophaga johnsonae).